The chain runs to 375 residues: MFISEIQLKNYRNYEKLELSFEDKVNVIIGENAQGKTNLMEAIYVLAMAKSHRTSNDRELIRWDEDFGQIKGKLQKRNSSLSLELNISKKGKKAKLNQLEQQKLSQYIGVMNVVMFAPEDLNLVKGSPQVRRRFLDMELGQIAPVYLYELSQYQKVLTQRNHLLKKMQGNSKNEETMLDVFTLQLIEHGTKILRKRFEFLHLLQEWAAPIHRGISRGLEELEIVYKPSVDVSESMDLSKIKEVYYESFQSVKQREIFRGTTLIGPHRDDLQFFVNSKNVQVFGSQGQQRTTALSLKLAEIELIYSEVKEYPILLLDDVLSELDDYRQSHLLNTIQGKVQTFVTTTSVDGIEHETLKEAKTIHVTNGTVDCEIDRA.

30 to 37 is an ATP binding site; the sequence is GENAQGKT.

The protein belongs to the RecF family.

The protein localises to the cytoplasm. The RecF protein is involved in DNA metabolism; it is required for DNA replication and normal SOS inducibility. RecF binds preferentially to single-stranded, linear DNA. It also seems to bind ATP. The chain is DNA replication and repair protein RecF from Bacillus anthracis (strain A0248).